A 356-amino-acid chain; its full sequence is Protein RecA (356 aa).

75–82 serves as a coordination point for ATP; the sequence is GPESSGKT.

It belongs to the RecA family.

It is found in the cytoplasm. Its function is as follows. Can catalyze the hydrolysis of ATP in the presence of single-stranded DNA, the ATP-dependent uptake of single-stranded DNA by duplex DNA, and the ATP-dependent hybridization of homologous single-stranded DNAs. It interacts with LexA causing its activation and leading to its autocatalytic cleavage. The protein is Protein RecA of Burkholderia mallei (strain ATCC 23344).